We begin with the raw amino-acid sequence, 412 residues long: Putative competence-damage inducible protein (412 aa).

Belongs to the CinA family.

The polypeptide is Putative competence-damage inducible protein (Bacillus cereus (strain Q1)).